The sequence spans 622 residues: 1-deoxy-D-xylulose-5-phosphate synthase (622 aa).

Thiamine diphosphate-binding positions include histidine 80 and 121–123 (GHS). Aspartate 152 is a binding site for Mg(2+). Thiamine diphosphate-binding positions include 153–154 (GA), asparagine 181, tyrosine 288, and glutamate 370. Asparagine 181 is a Mg(2+) binding site.

This sequence belongs to the transketolase family. DXPS subfamily. Homodimer. Mg(2+) is required as a cofactor. Requires thiamine diphosphate as cofactor.

The enzyme catalyses D-glyceraldehyde 3-phosphate + pyruvate + H(+) = 1-deoxy-D-xylulose 5-phosphate + CO2. The protein operates within metabolic intermediate biosynthesis; 1-deoxy-D-xylulose 5-phosphate biosynthesis; 1-deoxy-D-xylulose 5-phosphate from D-glyceraldehyde 3-phosphate and pyruvate: step 1/1. Functionally, catalyzes the acyloin condensation reaction between C atoms 2 and 3 of pyruvate and glyceraldehyde 3-phosphate to yield 1-deoxy-D-xylulose-5-phosphate (DXP). The chain is 1-deoxy-D-xylulose-5-phosphate synthase from Shewanella loihica (strain ATCC BAA-1088 / PV-4).